The chain runs to 316 residues: Transaldolase (316 aa).

The Schiff-base intermediate with substrate role is filled by Lys131.

The protein belongs to the transaldolase family. Type 1 subfamily. In terms of assembly, homodimer.

It is found in the cytoplasm. The catalysed reaction is D-sedoheptulose 7-phosphate + D-glyceraldehyde 3-phosphate = D-erythrose 4-phosphate + beta-D-fructose 6-phosphate. Its pathway is carbohydrate degradation; pentose phosphate pathway; D-glyceraldehyde 3-phosphate and beta-D-fructose 6-phosphate from D-ribose 5-phosphate and D-xylulose 5-phosphate (non-oxidative stage): step 2/3. Transaldolase is important for the balance of metabolites in the pentose-phosphate pathway. This Chromohalobacter salexigens (strain ATCC BAA-138 / DSM 3043 / CIP 106854 / NCIMB 13768 / 1H11) protein is Transaldolase.